A 483-amino-acid chain; its full sequence is Trigger factor (483 aa).

Residues 162–243 (GDYVSLDLSA…VRGVKEKELP (82 aa)) form the PPIase FKBP-type domain. Residues 459 to 483 (AVAPGDGDATVEPVEPVEAETDGNG) are disordered. Positions 473-483 (EPVEAETDGNG) are enriched in acidic residues.

The protein belongs to the FKBP-type PPIase family. Tig subfamily.

Its subcellular location is the cytoplasm. It carries out the reaction [protein]-peptidylproline (omega=180) = [protein]-peptidylproline (omega=0). Its function is as follows. Involved in protein export. Acts as a chaperone by maintaining the newly synthesized protein in an open conformation. Functions as a peptidyl-prolyl cis-trans isomerase. The protein is Trigger factor of Frankia casuarinae (strain DSM 45818 / CECT 9043 / HFP020203 / CcI3).